Reading from the N-terminus, the 284-residue chain is Pheromone-regulated membrane protein 4 (284 aa).

A helical membrane pass occupies residues 20–38; sequence IISLTLVLLGVFSFLLLTW. The Glutaredoxin domain maps to 157–272; that stretch reads RTDFLDIIRT…PLLKSEARGN (116 aa).

The protein localises to the membrane. The sequence is that of Pheromone-regulated membrane protein 4 (PRM4) from Saccharomyces cerevisiae (strain ATCC 204508 / S288c) (Baker's yeast).